A 569-amino-acid chain; its full sequence is Putative ABC transporter ATP-binding protein TTE1589 (569 aa).

ABC transporter domains are found at residues 8–248 (IIVK…IGLM) and 309–542 (IQAK…LSLK). Residues 43 to 50 (GPSGAGKS) and 342 to 349 (GHNGSGKT) contribute to the ATP site.

This sequence belongs to the ABC transporter superfamily.

It is found in the cell membrane. In terms of biological role, probably part of an ABC transporter complex. Responsible for energy coupling to the transport system. The sequence is that of Putative ABC transporter ATP-binding protein TTE1589 from Caldanaerobacter subterraneus subsp. tengcongensis (strain DSM 15242 / JCM 11007 / NBRC 100824 / MB4) (Thermoanaerobacter tengcongensis).